Reading from the N-terminus, the 302-residue chain is TATA-box-binding protein (302 aa).

Disordered regions lie at residues 1–22 (MEQNNSLPPFAQGLASPQGAMT) and 50–81 (SLLEEQQRQQQQQQAASQQQGGMVGGSGQTPQ). A compositionally biased stretch (low complexity) spans 50 to 70 (SLLEEQQRQQQQQQAASQQQG). 2 repeat units span residues 128–204 (LQNI…ARVV) and 218–295 (IQNM…YPIL).

This sequence belongs to the TBP family. As to expression, enriched in testis but hardly detectable in the ovary (at protein level).

The protein resides in the nucleus. In terms of biological role, general transcription factor that functions at the core of the DNA-binding multiprotein factor TFIID. Binding of TFIID to the TATA box is the initial transcriptional step of the pre-initiation complex (PIC), playing a role in the activation of eukaryotic genes transcribed by RNA polymerase II. Members of the TBP family are differentially required for transcription and development during early embryogenesis. Regulates mRNA levels in the early embryo by both transcriptional and post-transcriptional mechanisms. Required for transcription of a subset of genes at the mid-blastula transition (MBT). Negatively regulates the expression of other embryonic genes, including autoregulation of the tbp promoter itself. Also functions within a transcription-dependent mechanism to direct the temporally-regulated degradation of a subset of maternal mRNAs after the MBT. This is part of a general mechanism to regulate the maternal to zygotic transition and is required for normal embryonic development. Binds to promoters of a subset of genes. Required for gastrulation. This chain is TATA-box-binding protein, found in Danio rerio (Zebrafish).